The chain runs to 431 residues: 3-phosphoshikimate 1-carboxyvinyltransferase (431 aa).

Positions 21, 22, and 26 each coordinate 3-phosphoshikimate. Lys-21 lines the phosphoenolpyruvate pocket. Residues Gly-93 and Arg-122 each coordinate phosphoenolpyruvate. The 3-phosphoshikimate site is built by Ser-167, Gln-169, Asp-318, and Lys-345. Gln-169 contacts phosphoenolpyruvate. Asp-318 (proton acceptor) is an active-site residue. 2 residues coordinate phosphoenolpyruvate: Arg-349 and Arg-391.

It belongs to the EPSP synthase family. As to quaternary structure, monomer.

It is found in the cytoplasm. It catalyses the reaction 3-phosphoshikimate + phosphoenolpyruvate = 5-O-(1-carboxyvinyl)-3-phosphoshikimate + phosphate. Its pathway is metabolic intermediate biosynthesis; chorismate biosynthesis; chorismate from D-erythrose 4-phosphate and phosphoenolpyruvate: step 6/7. Functionally, catalyzes the transfer of the enolpyruvyl moiety of phosphoenolpyruvate (PEP) to the 5-hydroxyl of shikimate-3-phosphate (S3P) to produce enolpyruvyl shikimate-3-phosphate and inorganic phosphate. The sequence is that of 3-phosphoshikimate 1-carboxyvinyltransferase from Roseiflexus castenholzii (strain DSM 13941 / HLO8).